The primary structure comprises 792 residues: Kinesin-related protein 2 (792 aa).

2 disordered regions span residues 22-50 (TINSRPSLLRKPASSSSQSNDRISYPPST) and 162-183 (NNININSNNSSNSNNNILSPVQ). The span at 34–50 (ASSSSQSNDRISYPPST) shows a compositional bias: polar residues. The stretch at 284-423 (RLSLSIQDIK…LEKSRSDEKV (140 aa)) forms a coiled coil. Residues 437-781 (NIRVFCRIRP…LRFAAKVNSC (345 aa)) form the Kinesin motor domain. Position 528–535 (528–535 (GQTGSGKT)) interacts with ATP.

It belongs to the TRAFAC class myosin-kinesin ATPase superfamily. Kinesin family. NCD subfamily.

Its subcellular location is the nucleus. It is found in the cytoplasm. The protein localises to the cytoskeleton. The protein resides in the spindle. Its function is as follows. Microtubule-dependent motor that is probably involved in microtubule organization in the mitotic spindle. In Dictyostelium discoideum (Social amoeba), this protein is Kinesin-related protein 2 (kif2).